The primary structure comprises 454 residues: GTPase Der (454 aa).

2 EngA-type G domains span residues 4–167 and 188–363; these read AIVA…SEDK and LQLA…ASWQ. GTP is bound by residues 10-17, 56-60, 121-124, 194-201, 241-245, and 306-309; these read GKPNVGKS, DTPGL, NKTE, GRPNCGKS, DTAGV, and NKCD. The region spanning 364–450 is the KH-like domain; sequence KRVTTGTLNQ…PVRLSFVKGK (87 aa).

Belongs to the TRAFAC class TrmE-Era-EngA-EngB-Septin-like GTPase superfamily. EngA (Der) GTPase family. As to quaternary structure, associates with the 50S ribosomal subunit.

GTPase that plays an essential role in the late steps of ribosome biogenesis. The chain is GTPase Der from Orientia tsutsugamushi (strain Boryong) (Rickettsia tsutsugamushi).